Here is a 166-residue protein sequence, read N- to C-terminus: Small ribosomal subunit protein uS5 (166 aa).

An S5 DRBM domain is found at 11–74 (LQEKLIAVNR…EQAKRNLNKV (64 aa)).

Belongs to the universal ribosomal protein uS5 family. As to quaternary structure, part of the 30S ribosomal subunit. Contacts proteins S4 and S8.

Functionally, with S4 and S12 plays an important role in translational accuracy. In terms of biological role, located at the back of the 30S subunit body where it stabilizes the conformation of the head with respect to the body. This Aeromonas hydrophila subsp. hydrophila (strain ATCC 7966 / DSM 30187 / BCRC 13018 / CCUG 14551 / JCM 1027 / KCTC 2358 / NCIMB 9240 / NCTC 8049) protein is Small ribosomal subunit protein uS5.